We begin with the raw amino-acid sequence, 262 residues long: Ribosomal RNA small subunit methyltransferase A (262 aa).

Positions 14, 16, 41, 63, 85, and 105 each coordinate S-adenosyl-L-methionine.

The protein belongs to the class I-like SAM-binding methyltransferase superfamily. rRNA adenine N(6)-methyltransferase family. RsmA subfamily.

It is found in the cytoplasm. The catalysed reaction is adenosine(1518)/adenosine(1519) in 16S rRNA + 4 S-adenosyl-L-methionine = N(6)-dimethyladenosine(1518)/N(6)-dimethyladenosine(1519) in 16S rRNA + 4 S-adenosyl-L-homocysteine + 4 H(+). Specifically dimethylates two adjacent adenosines (A1518 and A1519) in the loop of a conserved hairpin near the 3'-end of 16S rRNA in the 30S particle. May play a critical role in biogenesis of 30S subunits. This chain is Ribosomal RNA small subunit methyltransferase A, found in Maridesulfovibrio salexigens (strain ATCC 14822 / DSM 2638 / NCIMB 8403 / VKM B-1763) (Desulfovibrio salexigens).